The following is a 221-amino-acid chain: uncharacterized protein (221 aa).

The region spanning 1 to 189 (MDSGKDTNGY…NVVYCSEKAV (189 aa)) is the Peptidase S8 domain.

It belongs to the peptidase S8 family.

This is an uncharacterized protein from Aquifex aeolicus (strain VF5).